The sequence spans 199 residues: Recombination protein RecR (199 aa).

A C4-type zinc finger spans residues 58 to 73 (CRICYNITDTEVCNIC). A Toprim domain is found at 81–176 (SLICVVSHPM…KVTRIAHGVP (96 aa)).

This sequence belongs to the RecR family.

May play a role in DNA repair. It seems to be involved in an RecBC-independent recombinational process of DNA repair. It may act with RecF and RecO. The protein is Recombination protein RecR of Thermoanaerobacter pseudethanolicus (strain ATCC 33223 / 39E) (Clostridium thermohydrosulfuricum).